Here is a 298-residue protein sequence, read N- to C-terminus: Quinolinate synthase (298 aa).

His19 and Ser36 together coordinate iminosuccinate. Cys81 is a [4Fe-4S] cluster binding site. Iminosuccinate contacts are provided by residues 107–109 (YVN) and Ser124. Cys168 lines the [4Fe-4S] cluster pocket. Iminosuccinate-binding positions include 193–195 (HPE) and Thr210. Residue Cys254 participates in [4Fe-4S] cluster binding.

This sequence belongs to the quinolinate synthase family. Type 2 subfamily. The cofactor is [4Fe-4S] cluster.

It localises to the cytoplasm. The catalysed reaction is iminosuccinate + dihydroxyacetone phosphate = quinolinate + phosphate + 2 H2O + H(+). It participates in cofactor biosynthesis; NAD(+) biosynthesis; quinolinate from iminoaspartate: step 1/1. In terms of biological role, catalyzes the condensation of iminoaspartate with dihydroxyacetone phosphate to form quinolinate. The sequence is that of Quinolinate synthase from Thermotoga sp. (strain RQ2).